Reading from the N-terminus, the 253-residue chain is Proteasome subunit alpha type-7 (253 aa).

The protein belongs to the peptidase T1A family. The 26S proteasome consists of a 20S proteasome core and two 19S regulatory subunits. The 20S proteasome core is composed of 28 subunits that are arranged in four stacked rings, resulting in a barrel-shaped structure. The two end rings are each formed by seven alpha subunits, and the two central rings are each formed by seven beta subunits. The catalytic chamber with the active sites is on the inside of the barrel.

Its subcellular location is the cytoplasm. It is found in the nucleus. In terms of biological role, the proteasome is a multicatalytic proteinase complex which is characterized by its ability to cleave peptides with Arg, Phe, Tyr, Leu, and Glu adjacent to the leaving group at neutral or slightly basic pH. The proteasome has an ATP-dependent proteolytic activity. This is Proteasome subunit alpha type-7 (pas-4) from Caenorhabditis elegans.